Consider the following 183-residue polypeptide: Large ribosomal subunit protein uL6 (183 aa).

The protein belongs to the universal ribosomal protein uL6 family. As to quaternary structure, part of the 50S ribosomal subunit.

In terms of biological role, this protein binds to the 23S rRNA, and is important in its secondary structure. It is located near the subunit interface in the base of the L7/L12 stalk, and near the tRNA binding site of the peptidyltransferase center. This chain is Large ribosomal subunit protein uL6, found in Chlamydia trachomatis serovar L2 (strain ATCC VR-902B / DSM 19102 / 434/Bu).